Here is a 742-residue protein sequence, read N- to C-terminus: uncharacterized protein (742 aa).

The interval 1–102 is disordered; sequence MMLLKRSNDN…FTQTKPNNTD (102 aa). Over residues 18-28 the composition is skewed to low complexity; sequence NRQNRQNNRQN. Basic and acidic residues predominate over residues 48 to 57; that stretch reads RDSSRMDPVD. 2 stretches are compositionally biased toward polar residues: residues 60 to 69 and 77 to 99; these read TLISFTSGKP and HDTG…TKPN.

This is an uncharacterized protein from Acanthamoeba polyphaga mimivirus (APMV).